Consider the following 2726-residue polypeptide: Filamin-C (2726 aa).

Residues 1-260 are actin-binding; the sequence is MMNNSNYSDA…VMTYLSQFPK (260 aa). S5 is modified (phosphoserine). Calponin-homology (CH) domains are found at residues 37–143 and 160–263; these read KIQQ…LHYS and QTPK…KAKL. Filamin repeat units lie at residues 271-369, 371-469, 470-566, 567-659, 663-759, 760-862, 863-961, 962-1057, 1058-1150, 1151-1245, 1246-1345, 1346-1438, 1439-1534, 1535-1631, and 1636-1735; these read SKQL…EVNV, MALG…PVHV, AEAC…EVQV, SPEA…IAHI, PPDC…RVNV, GEGS…HIKV, DPSH…VVNV, APPL…AVEG, VLPP…KATI, QPVF…RVHV, QPAV…RVGV, TEGC…RVPV, KDVV…KIKV, LPAH…RIHA, and DASK…HVLA. Residue R1003 is modified to Omega-N-methylarginine. Residues S1162 and S1339 each carry the phosphoserine modification. The interval 1736-1759 is hinge 1; sequence CDPLPHVEEPAEVLQLHQPYAPLR. 4 Filamin repeats span residues 1760–1854, 1855–1947, 1948–2034, and 2037–2129; these read PGTC…LQFY, VDAI…TAKI, TGDD…KILV, and SEIG…TVKV. The residue at position 2043 (S2043) is a Phosphoserine. The segment at 2163 to 2244 is intradomain insert; mediate targeting to Z lines; that stretch reads GNWFQMVSAQ…FGSITRQQEG (82 aa). Positions 2194–2210 are enriched in basic and acidic residues; sequence ISKTRGGETKREVRVEE. Positions 2194-2214 are disordered; that stretch reads ISKTRGGETKREVRVEESTQV. Phosphoserine is present on residues S2234 and S2237. T2239 is subject to Phosphothreonine. Polar residues predominate over residues 2241-2260; sequence QQEGEASSQDMTAQVTSPSG. Positions 2241–2261 are disordered; that stretch reads QQEGEASSQDMTAQVTSPSGK. The Filamin 20; mediates interaction with XIRP1 repeat unit spans residues 2245-2307; that stretch reads EASSQDMTAQ…VPGSPFQFTV (63 aa). 3 Filamin repeats span residues 2310 to 2402, 2404 to 2497, and 2501 to 2593; these read LGEG…VVPV, SLSD…KIRV, and SQAG…KAKV. The interval 2404 to 2725 is interaction with INPPL1; it reads SLSDDARRLT…VPGSPFKVNV (322 aa). Phosphoserine occurs at positions 2587, 2618, 2621, 2633, 2715, and 2719. Residues 2594–2630 form a hinge 2 region; it reads TGPRLSGGHSLHETSTVLVETVTKSSSSRGASYSSIP. A self-association site, tail region spans residues 2594 to 2726; that stretch reads TGPRLSGGHS…PGSPFKVNVP (133 aa). One copy of the Filamin 24 repeat lies at 2631 to 2725; it reads KFSSDASKVV…VPGSPFKVNV (95 aa).

It belongs to the filamin family. Homodimer; the filamin repeat 24 and the second hinge domain are important for dimer formation. Interacts with FLNB, KCND2, INPPL1, ITGB1A, MYOT, MYOZ1 and MYOZ3. Interacts with sarcoglycans SGCD and SGCG. Interacts (via filament repeats 17-18, 20-21 and 24) with USP25 (isoform USP25m only). Interacts with FBLIM1. Interacts with KY. Interacts with IGFN1. Interacts with MICALL2. Interacts with XIRP1; this interaction is mediated by filamin 20 repeat. Interacts with ANK3. Interacts with SYNPO2. Ubiquitinated by FBXL22, leading to proteasomal degradation.

The protein resides in the cytoplasm. It localises to the membrane. The protein localises to the cytoskeleton. It is found in the myofibril. Its subcellular location is the sarcomere. The protein resides in the z line. Muscle-specific filamin, which plays a central role in sarcomere assembly and organization. Critical for normal myogenesis, it probably functions as a large actin-cross-linking protein with structural functions at the Z lines in muscle cells. May be involved in reorganizing the actin cytoskeleton in response to signaling events. The protein is Filamin-C (Flnc) of Rattus norvegicus (Rat).